The primary structure comprises 63 residues: Large ribosomal subunit protein uL29 (63 aa).

Belongs to the universal ribosomal protein uL29 family.

This chain is Large ribosomal subunit protein uL29, found in Chromohalobacter salexigens (strain ATCC BAA-138 / DSM 3043 / CIP 106854 / NCIMB 13768 / 1H11).